A 152-amino-acid polypeptide reads, in one-letter code: Transcriptional regulator MraZ (152 aa).

SpoVT-AbrB domains are found at residues 5-52 and 81-124; these read AQAI…PLKE and ATEC…SETE.

It belongs to the MraZ family. In terms of assembly, forms oligomers.

It localises to the cytoplasm. It is found in the nucleoid. This chain is Transcriptional regulator MraZ, found in Mannheimia succiniciproducens (strain KCTC 0769BP / MBEL55E).